Reading from the N-terminus, the 85-residue chain is Large ribosomal subunit protein bL27 (85 aa).

Residues 1–10 show a composition bias toward gly residues; the sequence is MAQKKGGGST. Positions 1–20 are disordered; sequence MAQKKGGGSTRNGRDSKPKM.

This sequence belongs to the bacterial ribosomal protein bL27 family.

The protein is Large ribosomal subunit protein bL27 of Acidovorax ebreus (strain TPSY) (Diaphorobacter sp. (strain TPSY)).